The sequence spans 1427 residues: DNA-directed RNA polymerase subunit beta' (1427 aa).

The Zn(2+) site is built by C66, C68, C81, and C84. Residues D472, D474, and D476 each coordinate Mg(2+). The Zn(2+) site is built by C815, C889, C896, and C899.

This sequence belongs to the RNA polymerase beta' chain family. In terms of assembly, the RNAP catalytic core consists of 2 alpha, 1 beta, 1 beta' and 1 omega subunit. When a sigma factor is associated with the core the holoenzyme is formed, which can initiate transcription. Requires Mg(2+) as cofactor. The cofactor is Zn(2+).

It carries out the reaction RNA(n) + a ribonucleoside 5'-triphosphate = RNA(n+1) + diphosphate. Its function is as follows. DNA-dependent RNA polymerase catalyzes the transcription of DNA into RNA using the four ribonucleoside triphosphates as substrates. This Bacteroides fragilis (strain YCH46) protein is DNA-directed RNA polymerase subunit beta'.